A 187-amino-acid chain; its full sequence is Orotate phosphoribosyltransferase (187 aa).

Position 110-118 (110-118 (EDVVTTGGS)) interacts with 5-phospho-alpha-D-ribose 1-diphosphate. Residues T114 and R142 each coordinate orotate.

The protein belongs to the purine/pyrimidine phosphoribosyltransferase family. PyrE subfamily. Homodimer. Mg(2+) serves as cofactor.

The enzyme catalyses orotidine 5'-phosphate + diphosphate = orotate + 5-phospho-alpha-D-ribose 1-diphosphate. Its pathway is pyrimidine metabolism; UMP biosynthesis via de novo pathway; UMP from orotate: step 1/2. Its function is as follows. Catalyzes the transfer of a ribosyl phosphate group from 5-phosphoribose 1-diphosphate to orotate, leading to the formation of orotidine monophosphate (OMP). This chain is Orotate phosphoribosyltransferase, found in Thermotoga neapolitana (strain ATCC 49049 / DSM 4359 / NBRC 107923 / NS-E).